The sequence spans 299 residues: 4-hydroxy-tetrahydrodipicolinate synthase (299 aa).

Position 45 (Thr45) interacts with pyruvate. Tyr133 acts as the Proton donor/acceptor in catalysis. The Schiff-base intermediate with substrate role is filled by Lys161. Ile203 provides a ligand contact to pyruvate.

Belongs to the DapA family. Homotetramer; dimer of dimers.

The protein resides in the cytoplasm. It carries out the reaction L-aspartate 4-semialdehyde + pyruvate = (2S,4S)-4-hydroxy-2,3,4,5-tetrahydrodipicolinate + H2O + H(+). The protein operates within amino-acid biosynthesis; L-lysine biosynthesis via DAP pathway; (S)-tetrahydrodipicolinate from L-aspartate: step 3/4. Catalyzes the condensation of (S)-aspartate-beta-semialdehyde [(S)-ASA] and pyruvate to 4-hydroxy-tetrahydrodipicolinate (HTPA). The polypeptide is 4-hydroxy-tetrahydrodipicolinate synthase (Blochmanniella pennsylvanica (strain BPEN)).